We begin with the raw amino-acid sequence, 392 residues long: Phosphopentomutase (392 aa).

Mn(2+)-binding residues include aspartate 10, aspartate 282, histidine 287, aspartate 323, histidine 324, and histidine 335.

The protein belongs to the phosphopentomutase family. Requires Mn(2+) as cofactor.

The protein localises to the cytoplasm. It carries out the reaction 2-deoxy-alpha-D-ribose 1-phosphate = 2-deoxy-D-ribose 5-phosphate. It catalyses the reaction alpha-D-ribose 1-phosphate = D-ribose 5-phosphate. It functions in the pathway carbohydrate degradation; 2-deoxy-D-ribose 1-phosphate degradation; D-glyceraldehyde 3-phosphate and acetaldehyde from 2-deoxy-alpha-D-ribose 1-phosphate: step 1/2. Isomerase that catalyzes the conversion of deoxy-ribose 1-phosphate (dRib-1-P) and ribose 1-phosphate (Rib-1-P) to deoxy-ribose 5-phosphate (dRib-5-P) and ribose 5-phosphate (Rib-5-P), respectively. This chain is Phosphopentomutase, found in Dictyoglomus thermophilum (strain ATCC 35947 / DSM 3960 / H-6-12).